A 127-amino-acid chain; its full sequence is ATP synthase epsilon chain (127 aa).

The protein belongs to the ATPase epsilon chain family. In terms of assembly, F-type ATPases have 2 components, CF(1) - the catalytic core - and CF(0) - the membrane proton channel. CF(1) has five subunits: alpha(3), beta(3), gamma(1), delta(1), epsilon(1). CF(0) has three main subunits: a, b and c.

The protein resides in the cell inner membrane. In terms of biological role, produces ATP from ADP in the presence of a proton gradient across the membrane. The protein is ATP synthase epsilon chain of Leptospira interrogans serogroup Icterohaemorrhagiae serovar copenhageni (strain Fiocruz L1-130).